We begin with the raw amino-acid sequence, 256 residues long: Triosephosphate isomerase (256 aa).

12-14 (NWK) contacts substrate. The active-site Electrophile is the His-99. Glu-169 acts as the Proton acceptor in catalysis. Substrate-binding positions include Gly-175, Ser-214, and 235-236 (GG).

The protein belongs to the triosephosphate isomerase family. In terms of assembly, homodimer.

The protein resides in the cytoplasm. It catalyses the reaction D-glyceraldehyde 3-phosphate = dihydroxyacetone phosphate. It functions in the pathway carbohydrate biosynthesis; gluconeogenesis. It participates in carbohydrate degradation; glycolysis; D-glyceraldehyde 3-phosphate from glycerone phosphate: step 1/1. Involved in the gluconeogenesis. Catalyzes stereospecifically the conversion of dihydroxyacetone phosphate (DHAP) to D-glyceraldehyde-3-phosphate (G3P). This Rhizobium etli (strain ATCC 51251 / DSM 11541 / JCM 21823 / NBRC 15573 / CFN 42) protein is Triosephosphate isomerase.